The chain runs to 140 residues: Cytochrome c-type biogenesis protein CcmE (140 aa).

Residues 1-7 (MKRKHKR) are Cytoplasmic-facing. Residues 8-28 (LLFVLASFCAAGCALLFILSE) form a helical; Signal-anchor for type II membrane protein membrane-spanning segment. Residues 29–140 (LRESVSFFYT…TIPKALPEPK (112 aa)) lie on the Periplasmic side of the membrane. Histidine 121 and tyrosine 125 together coordinate heme.

The protein belongs to the CcmE/CycJ family.

Its subcellular location is the cell inner membrane. Its function is as follows. Heme chaperone required for the biogenesis of c-type cytochromes. Transiently binds heme delivered by CcmC and transfers the heme to apo-cytochromes in a process facilitated by CcmF and CcmH. This is Cytochrome c-type biogenesis protein CcmE from Anaplasma marginale (strain Florida).